The chain runs to 429 residues: MRVNIVGAGLAGVEVAYKLLREGFKVRIFEQKPVKFSPVHKMETFGELVCSNSLKSESLKNAEGILKEEMKLLDSLVLNCAYKTRVPAGKALAVDREKFSQCITKVLESFENIEIVRKEVEKIDLDTNEIWVVATGPTTDGKFAQWLSKLTGGFLNFFDAVAPIISRDSIDFNKCFVGDRYGVGTGDYINCPMTKEEYERFYRELVNAEMIEMKDFDRKLLFERCQPIEEIAKSGEKSLLFGPLRPVGLVNPHTGEIPYAVIQLRKEDEEGNMYNIVGFQTRLKWSEQKRIIRLIPGLENAEILRYGVMHRNTYIDTPRVLDEFLRHKKYKNIFFAGQITGVEGYLESAACGIYVGLNISRILSGKEPVKLPPKTMMGALINYITKADELKPMYANFGLINVKMKKNEKREKLHEICINEMKNFLNMLK.

7-12 (GAGLAG) contacts FAD.

Belongs to the MnmG family. TrmFO subfamily. The cofactor is FAD.

The protein resides in the cytoplasm. It catalyses the reaction uridine(54) in tRNA + (6R)-5,10-methylene-5,6,7,8-tetrahydrofolate + NADH + H(+) = 5-methyluridine(54) in tRNA + (6S)-5,6,7,8-tetrahydrofolate + NAD(+). It carries out the reaction uridine(54) in tRNA + (6R)-5,10-methylene-5,6,7,8-tetrahydrofolate + NADPH + H(+) = 5-methyluridine(54) in tRNA + (6S)-5,6,7,8-tetrahydrofolate + NADP(+). Its function is as follows. Catalyzes the folate-dependent formation of 5-methyl-uridine at position 54 (M-5-U54) in all tRNAs. This chain is Methylenetetrahydrofolate--tRNA-(uracil-5-)-methyltransferase TrmFO, found in Thermosipho africanus (strain TCF52B).